The sequence spans 426 residues: Phosphomethylpyrimidine synthase (426 aa).

Residues Asn-65, Met-94, Tyr-123, His-162, 184-186 (SRG), 225-228 (DGMR), and Glu-264 contribute to the substrate site. Residue His-268 coordinates Zn(2+). Tyr-291 serves as a coordination point for substrate. His-332 contributes to the Zn(2+) binding site. [4Fe-4S] cluster is bound by residues Cys-408, Cys-411, and Cys-415.

This sequence belongs to the ThiC family. It depends on [4Fe-4S] cluster as a cofactor.

The catalysed reaction is 5-amino-1-(5-phospho-beta-D-ribosyl)imidazole + S-adenosyl-L-methionine = 4-amino-2-methyl-5-(phosphooxymethyl)pyrimidine + CO + 5'-deoxyadenosine + formate + L-methionine + 3 H(+). It participates in cofactor biosynthesis; thiamine diphosphate biosynthesis. In terms of biological role, catalyzes the synthesis of the hydroxymethylpyrimidine phosphate (HMP-P) moiety of thiamine from aminoimidazole ribotide (AIR) in a radical S-adenosyl-L-methionine (SAM)-dependent reaction. This Methanococcus maripaludis (strain C5 / ATCC BAA-1333) protein is Phosphomethylpyrimidine synthase.